Here is a 140-residue protein sequence, read N- to C-terminus: Large ribosomal subunit protein bL17 (140 aa).

Residues 121 to 140 are disordered; that stretch reads AAKGLDSGPTAEANDDDSEE.

This sequence belongs to the bacterial ribosomal protein bL17 family. In terms of assembly, part of the 50S ribosomal subunit. Contacts protein L32.

This Rhodospirillum rubrum (strain ATCC 11170 / ATH 1.1.1 / DSM 467 / LMG 4362 / NCIMB 8255 / S1) protein is Large ribosomal subunit protein bL17.